The primary structure comprises 461 residues: Argininosuccinate lyase (461 aa).

This sequence belongs to the lyase 1 family. Argininosuccinate lyase subfamily.

It is found in the cytoplasm. It carries out the reaction 2-(N(omega)-L-arginino)succinate = fumarate + L-arginine. Its pathway is amino-acid biosynthesis; L-arginine biosynthesis; L-arginine from L-ornithine and carbamoyl phosphate: step 3/3. This chain is Argininosuccinate lyase, found in Chlorobium luteolum (strain DSM 273 / BCRC 81028 / 2530) (Pelodictyon luteolum).